A 474-amino-acid chain; its full sequence is MLYTFDQVSKDVVKKLQGKDLRPVRCLSDATKFRQFDILQKTPQSLFFKSEDTPVGYSLLQILEPNFPVPETEVSAPMPLKHITSQKWKADVDVKATIADGGASAEFVQSCGYDIEVQSRSIPDSKLESLQNRQGPWGKLLDKKLSFVTDCQMGRNNLYVVTEVFEVTKDTVVQGSSSIDLSGKALVSQLVKGEAQGQWQRETTDLVPIPKGAVLAYKKKQLVIENNTCAILLSANAKKKTFPGIFNFGMSSRSQTMEIVNSSWIDYIPPIGRIEEPVHLDFKYLEKEVFLRKEQLAMLSKDVQDVVFSNLLPMLSDSDVLFDLINMLELDQLGHMDGPAGLILDELRKNSSTPWIDLKGLILYLLQALMVLSDTQLDLLAQSMEMRILLQQRELVRSILEPNFKYPWNIPFTLQPQLLAPLQGEGLAITYELLKGCGLKMEPNSPRSTWDLEAKMPLSALYGILSCLQQLVEA.

The triggers pyroptosis stretch occupies residues 1-237; the sequence is MLYTFDQVSK…TCAILLSANA (237 aa).

This sequence belongs to the gasdermin family. In terms of assembly, homooligomer; homooligomeric ring-shaped pore complex containing 27-28 subunits when inserted in the membrane. Post-translationally, cleavage by CASP8 relieves autoinhibition by releasing the N-terminal moiety (Gasdermin-C, N-terminal) that initiates pyroptosis. Palmitoylated.

Its subcellular location is the cytoplasm. It localises to the cytosol. The protein localises to the cell membrane. With respect to regulation, the full-length protein before cleavage is inactive: intramolecular interactions between N- and C-terminal domains mediate autoinhibition in the absence of activation signal. The intrinsic pyroptosis-inducing activity is carried by the released N-terminal moiety (Gasdermin-C, N-terminal) following cleavage by caspase CASP8. In terms of biological role, this form constitutes the precursor of the pore-forming protein: upon cleavage, the released N-terminal moiety (Gasdermin-C, N-terminal) binds to membranes and forms pores, triggering pyroptosis. Functionally, pore-forming protein that causes membrane permeabilization and pyroptosis. Produced by the cleavage of gasdermin-C by caspase CASP8 in response to death signals. After cleavage, moves to the plasma membrane where it strongly binds to membrane inner leaflet lipids. Homooligomerizes within the membrane and forms pores of 10-15 nanometers (nm) of inner diameter, triggering pyroptosis. This is Gasdermin-C from Rattus norvegicus (Rat).